A 182-amino-acid polypeptide reads, in one-letter code: MGCSGCSGGCGSSCGGCGSRCGGCSSSCCVPVCCCKPVCCCVPACSCSSCGKGGCGSSCGGSKGGCGSCGGSKGGCGSCGGCGSSCCKPVCCCVPACSCSSCGKGGCGSCGGSKGGCGSCGGSKGGCGSCGGCGSGCGSSCCVPVCCCVPACSCSSCGKGGCGSCGCSQSSCCVPVCCQRKI.

It belongs to the KRTAP type 5 family. Cuticle layers of differentiating wool follicles.

Functionally, the keratin products of mammalian epidermal derivatives such as wool and hair consist of microfibrils embedded in a rigid matrix of other proteins. The matrix proteins include the high-sulfur and high-tyrosine keratins, having molecular weights of 6-20 kDa, whereas the microfibrils contain the larger, low-sulfur keratins (40-56 kDa). The protein is Keratin, ultra high-sulfur matrix protein of Ovis aries (Sheep).